Reading from the N-terminus, the 746-residue chain is Exocyst complex component 3-like protein (746 aa).

The segment at 1–23 (MDSAAKDEMQPALSPGPEWPEQE) is disordered. The segment at 1 to 370 (MDSAAKDEMQ…DVSQLEPLLT (370 aa)) is mediates interaction with EXOC2, EXOC4 and EXOC5.

Belongs to the SEC6 family. In terms of assembly, interacts with EXOC2, EXOC4 and EXOC5; may be part of the exocyst.

Its subcellular location is the cytoplasmic vesicle. The protein localises to the secretory vesicle. Its function is as follows. As part of the exocyst, may play a role in regulated exocytosis of insulin granules. This is Exocyst complex component 3-like protein (EXOC3L1) from Homo sapiens (Human).